Reading from the N-terminus, the 389-residue chain is Inner membrane transport protein YdhP (389 aa).

Over 1-6 the chain is Cytoplasmic; that stretch reads MKINYP. The helical transmembrane segment at 7–27 threads the bilayer; sequence LLALAIGAFGIGTTEFSPMGL. Over 28–43 the chain is Periplasmic; the sequence is LPVIARGVDVSIPAAG. A helical transmembrane segment spans residues 44 to 64; that stretch reads MLISAYAVGVMVGAPLMTLLL. Residues 65-70 are Cytoplasmic-facing; sequence SHRARR. The helical transmembrane segment at 71 to 91 threads the bilayer; that stretch reads SALIFLMAIFTLGNVLSAIAP. At 92–100 the chain is on the periplasmic side; it reads DYMTLMLSR. Residues 101 to 121 traverse the membrane as a helical segment; the sequence is ILTSLNHGAFFGLGSVVAASV. At 122–130 the chain is on the cytoplasmic side; that stretch reads VPKHKQASA. Residues 131–151 form a helical membrane-spanning segment; it reads VATMFMGLTLANIGGVPAATW. Over 152-159 the chain is Periplasmic; it reads LGETIGWR. The helical transmembrane segment at 160-180 threads the bilayer; it reads MSFLATAGLGVISMVSLFFSL. Topologically, residues 181 to 203 are cytoplasmic; sequence PKGGAGARPEVKKELAVLMRPQV. The chain crosses the membrane as a helical span at residues 204–224; it reads LSALLTTVLGAGAMFTLYTYI. The Periplasmic portion of the chain corresponds to 225 to 236; it reads SPVLQSITHATP. The chain crosses the membrane as a helical span at residues 237 to 257; that stretch reads VFVTAMLVLIGVGFSIGNYLG. Residues 258–266 are Cytoplasmic-facing; the sequence is GKLADRSVN. The chain crosses the membrane as a helical span at residues 267–287; that stretch reads GTLKGFLLLLMVIMLAIPFLA. Residues 288–290 lie on the Periplasmic side of the membrane; the sequence is RNE. Residues 291-311 form a helical membrane-spanning segment; the sequence is FGAAISMVVWGAATFAVVPPL. The Cytoplasmic portion of the chain corresponds to 312-330; the sequence is QMRVMRVASEAPGLSSSVN. A helical transmembrane segment spans residues 331-351; sequence IGAFNLGNALGAAAGGAVISA. Residues 352–356 lie on the Periplasmic side of the membrane; sequence GLGYS. Residues 357–377 form a helical membrane-spanning segment; it reads FVPVMGAIVAGLALLLVFMSA. Residues 378–389 are Cytoplasmic-facing; that stretch reads RKQPETVCVANS.

Belongs to the major facilitator superfamily.

Its subcellular location is the cell inner membrane. The sequence is that of Inner membrane transport protein YdhP (ydhP) from Escherichia coli (strain K12).